The following is a 788-amino-acid chain: Protein FAR1-RELATED SEQUENCE 5 (788 aa).

Residues 87–179 form the FAR1 domain; that stretch reads AFYNSYARRI…VKDHNHELVP (93 aa). Residues 299–395 enclose the MULE domain; sequence TVTFDTTYRS…CKWHILKKCQ (97 aa). An SWIM-type zinc finger spans residues 584–616; it reads FNVLEMRANCSCQMFEFSGIICRHILAVFRVTN. The tract at residues 713 to 733 is disordered; that stretch reads SSVTGGKHQQEVLAQPEPEDE. Residues 731 to 768 are a coiled coil; sequence EDEMDKKINQLRNELELANRKCEAYRTNLLSVLKEMED.

It belongs to the FHY3/FAR1 family. In terms of tissue distribution, expressed in hypocotyls, rosette and cauline leaves, inflorescences stems, flowers and siliques.

It is found in the nucleus. Putative transcription activator involved in regulating light control of development. In Arabidopsis thaliana (Mouse-ear cress), this protein is Protein FAR1-RELATED SEQUENCE 5 (FRS5).